We begin with the raw amino-acid sequence, 398 residues long: S-adenosylmethionine synthase (398 aa).

136–141 (GTGSSD) contacts ATP.

The protein belongs to the AdoMet synthase 2 family. Mg(2+) is required as a cofactor.

It carries out the reaction L-methionine + ATP + H2O = S-adenosyl-L-methionine + phosphate + diphosphate. The protein operates within amino-acid biosynthesis; S-adenosyl-L-methionine biosynthesis; S-adenosyl-L-methionine from L-methionine: step 1/1. Functionally, catalyzes the formation of S-adenosylmethionine from methionine and ATP. The polypeptide is S-adenosylmethionine synthase (Methanosarcina acetivorans (strain ATCC 35395 / DSM 2834 / JCM 12185 / C2A)).